We begin with the raw amino-acid sequence, 324 residues long: Olfactory receptor 2T2 (324 aa).

At 1–26 the chain is on the extracellular side; sequence MGMEGLLQNSTNFVLTGLITHPAFPG. N-linked (GlcNAc...) asparagine glycosylation is present at Asn-9. A helical membrane pass occupies residues 27-50; it reads LLFAIVFSIFVVAITANLVMILLI. Residues 51–58 lie on the Cytoplasmic side of the membrane; that stretch reads HMDSRLHT. The chain crosses the membrane as a helical span at residues 59 to 80; it reads PMYFLLSQLSIMDTIYICITVP. Residues 81 to 101 lie on the Extracellular side of the membrane; sequence KMLQDLLSKDKTISFLGCAVQ. An intrachain disulfide couples Cys-98 to Cys-190. Residues 102–121 traverse the membrane as a helical segment; sequence IFLYLTLIGGEFFLLGLMAY. At 122-140 the chain is on the cytoplasmic side; it reads DRYVAVCNPLRYPLLMNRR. The helical transmembrane segment at 141 to 159 threads the bilayer; it reads VCLFMVVGSWVGGSLDGFM. Topologically, residues 160–196 are extracellular; it reads LTPVTMSFPFCRSREINHFFCEIPAVLKLSCTDTSLY. The helical transmembrane segment at 197–220 threads the bilayer; it reads ETLMYACCVLMLLIPLSVISVSYT. The Cytoplasmic portion of the chain corresponds to 221 to 237; that stretch reads HILLTVHRMNSAEGRRK. Residues 238–260 form a helical membrane-spanning segment; sequence AFATCSSHIMVVSVFYGAAFYTN. Residues 261–273 are Extracellular-facing; the sequence is VLPHSYHTPEKDK. The helical transmembrane segment at 274 to 293 threads the bilayer; it reads VVSAFYTILTPMLNPLIYSL. At 294–324 the chain is on the cytoplasmic side; the sequence is RNKDVAAALRKVLGRCGSSQSIRVATVIRKG.

Belongs to the G-protein coupled receptor 1 family.

Its subcellular location is the cell membrane. Odorant receptor. This is Olfactory receptor 2T2 (OR2T2) from Homo sapiens (Human).